A 23-amino-acid polypeptide reads, in one-letter code: Maculatin-1.2 (23 aa).

At Ala-23 the chain carries Alanine amide.

In terms of tissue distribution, expressed by the skin dorsal glands.

It is found in the secreted. Functionally, shows antibacterial activity against S.aureus and S.uberis. In Ranoidea genimaculata (Brown-spotted tree frog), this protein is Maculatin-1.2.